The following is a 129-amino-acid chain: MASAWPRSLPQILVLGFGLVLMRAAAGEQAPGTSPCSSGSSWSADLDKCMDCASCPARPHSDFCLGCAAAPPAHFRLLWPILGGALSLVLVLALVSSFLVWRRCRRREKFTTPIEETGGEGCPGVALIQ.

An N-terminal signal peptide occupies residues 1–27 (MASAWPRSLPQILVLGFGLVLMRAAAG). Residues 28-80 (EQAPGTSPCSSGSSWSADLDKCMDCASCPARPHSDFCLGCAAAPPAHFRLLWP) lie on the Extracellular side of the membrane. Cystine bridges form between cysteine 36-cysteine 49, cysteine 52-cysteine 67, and cysteine 55-cysteine 64. Residues 36–67 (CSSGSSWSADLDKCMDCASCPARPHSDFCLGC) form a TNFR-Cys; atypical repeat. A helical transmembrane segment spans residues 81–101 (ILGGALSLVLVLALVSSFLVW). At 102–129 (RRCRRREKFTTPIEETGGEGCPGVALIQ) the chain is on the cytoplasmic side.

Associates with TRAF1 and TRAF2, and probably also with TRAF3. Highly expressed in fetal heart, intestine, kidney, liver, lung and skin, and in adult heart and ovary. Intermediate expression in adult kidney, lung and skin.

The protein localises to the membrane. Functionally, receptor for TNFSF12/TWEAK. Weak inducer of apoptosis in some cell types. Promotes angiogenesis and the proliferation of endothelial cells. May modulate cellular adhesion to matrix proteins. In Mus musculus (Mouse), this protein is Tumor necrosis factor receptor superfamily member 12A (Tnfrsf12a).